A 248-amino-acid polypeptide reads, in one-letter code: Small ribosomal subunit protein uS3 (248 aa).

Residues 39–113 (IRAYLTKQLS…TIRINVVEVT (75 aa)) form the KH type-2 domain. The tract at residues 218 to 248 (ERPEQKVPLQQPKRRQQRRRPTFEDRSAVEA) is disordered. A compositionally biased stretch (basic and acidic residues) spans 238–248 (PTFEDRSAVEA).

This sequence belongs to the universal ribosomal protein uS3 family. As to quaternary structure, part of the 30S ribosomal subunit. Forms a tight complex with proteins S10 and S14.

Its function is as follows. Binds the lower part of the 30S subunit head. Binds mRNA in the 70S ribosome, positioning it for translation. The polypeptide is Small ribosomal subunit protein uS3 (Synechococcus sp. (strain JA-3-3Ab) (Cyanobacteria bacterium Yellowstone A-Prime)).